The sequence spans 155 residues: Protein U1 (155 aa).

Belongs to the nanovirus U1 protein family.

This chain is Protein U1 (DNA-U1), found in Cicer arietinum (Chickpea).